Here is a 118-residue protein sequence, read N- to C-terminus: Large ribosomal subunit protein bL20 (118 aa).

This sequence belongs to the bacterial ribosomal protein bL20 family.

In terms of biological role, binds directly to 23S ribosomal RNA and is necessary for the in vitro assembly process of the 50S ribosomal subunit. It is not involved in the protein synthesizing functions of that subunit. The protein is Large ribosomal subunit protein bL20 of Lactobacillus acidophilus (strain ATCC 700396 / NCK56 / N2 / NCFM).